Consider the following 236-residue polypeptide: Purine nucleoside phosphorylase (236 aa).

His5 provides a ligand contact to a purine D-ribonucleoside. Phosphate-binding positions include Gly21, Arg25, Arg43, and 86–89 (RYGT). A purine D-ribonucleoside-binding positions include Glu163, 180-182 (EME), and 204-205 (SD).

Belongs to the PNP/UDP phosphorylase family. As to quaternary structure, homohexamer; disulfide-linked. Trimer of homodimers, with three symmetric intersubunit disulfide bonds linking the dimers to one another.

It catalyses the reaction S-methyl-5'-thioadenosine + phosphate = 5-(methylsulfanyl)-alpha-D-ribose 1-phosphate + adenine. It carries out the reaction a purine D-ribonucleoside + phosphate = a purine nucleobase + alpha-D-ribose 1-phosphate. The catalysed reaction is a purine 2'-deoxy-D-ribonucleoside + phosphate = a purine nucleobase + 2-deoxy-alpha-D-ribose 1-phosphate. The protein operates within purine metabolism; purine nucleoside salvage. Its function is as follows. Cleavage of guanosine or inosine to respective bases and sugar-1-phosphate molecules. Cleaves inosine, guanosine, and adenosine with a better efficiency than MTA. The sequence is that of Purine nucleoside phosphorylase from Saccharolobus solfataricus (strain ATCC 35092 / DSM 1617 / JCM 11322 / P2) (Sulfolobus solfataricus).